The chain runs to 196 residues: MSQIFAYCRISTLDQTTENQRREIESAGFKIKPQQIIEEHISGSAATSERPGFNRLLARLKCGDQLIVTKLDRLGCNAMDIRKTVEQLTETGIRVHCLALGGIDLTSPTGKMMMQVISAVAEFERDLLLERTHSGIVRARGAGKRFGRPPVLNEEQKQAVFERIKSGVSISAIAREFKTSRQTILRAKAKLQTPDI.

In terms of domain architecture, Resolvase/invertase-type recombinase catalytic spans Q3–G143. S11 acts as the O-(5'-phospho-DNA)-serine intermediate in catalysis.

This sequence belongs to the site-specific recombinase resolvase family.

The protein is Serine recombinase PinQ (pinQ) of Escherichia coli (strain K12).